Reading from the N-terminus, the 342-residue chain is S-adenosylmethionine:tRNA ribosyltransferase-isomerase (342 aa).

It belongs to the QueA family. As to quaternary structure, monomer.

The protein resides in the cytoplasm. The enzyme catalyses 7-aminomethyl-7-carbaguanosine(34) in tRNA + S-adenosyl-L-methionine = epoxyqueuosine(34) in tRNA + adenine + L-methionine + 2 H(+). It functions in the pathway tRNA modification; tRNA-queuosine biosynthesis. In terms of biological role, transfers and isomerizes the ribose moiety from AdoMet to the 7-aminomethyl group of 7-deazaguanine (preQ1-tRNA) to give epoxyqueuosine (oQ-tRNA). This chain is S-adenosylmethionine:tRNA ribosyltransferase-isomerase, found in Listeria monocytogenes serovar 1/2a (strain ATCC BAA-679 / EGD-e).